The sequence spans 56 residues: Small ribosomal subunit protein bS21 (56 aa).

The protein belongs to the bacterial ribosomal protein bS21 family.

This Synechococcus sp. (strain RCC307) protein is Small ribosomal subunit protein bS21.